Here is a 212-residue protein sequence, read N- to C-terminus: MGRSPCCEKAHMNKGAWTKEEDQRLIDYIRNHGEGSWRSLPKSVGLLRCGKSCRLRWINYLRPDLKRGNFTDGEEQIIVKLHSLFGNKWSLIAGKLPGRTDNEIKNYWNTHIKRKLLNRGIDPKTHGSIIEPKTTSFHPRNEDLKSTFPGSVKLKMETSCENCASTSGTTTDEDLRLSVDCDYRYDHLDKELNLDLTLGYSPTRFVGVGSCY.

2 consecutive HTH myb-type domains span residues 9–61 (KAHM…INYL) and 62–116 (RPDL…KRKL). DNA-binding regions (H-T-H motif) lie at residues 37–61 (WRSLPKSVGLLRCGKSCRLRWINYL) and 89–112 (WSLIAGKLPGRTDNEIKNYWNTHI).

Its subcellular location is the nucleus. In terms of biological role, transcription activator. The polypeptide is Transcription factor MYB8 (Arabidopsis thaliana (Mouse-ear cress)).